The chain runs to 931 residues: Up-regulator of cell proliferation (931 aa).

S3 is subject to Phosphoserine. A VLIG-type G domain is found at 689-929; the sequence is RSRLVVLSTV…NIQQLIELVR (241 aa).

Belongs to the TRAFAC class dynamin-like GTPase superfamily. Very large inducible GTPase (VLIG) family. Strongly expressed in hepatitis B virus-infected liver and in HCC cells. Also highly expressed in well-differentiated gastric cancer tissues and various gastric cancer cell lines.

The protein resides in the cytoplasm. Its subcellular location is the nucleus. Functionally, may be involved in cell cycle progression through the regulation of cyclin D1 expression. May participate in the development of hepatocellular carcinoma (HCC) by promoting hepatocellular growth and survival. May play an important role in development of gastric cancer. In Homo sapiens (Human), this protein is Up-regulator of cell proliferation (URGCP).